The sequence spans 69 residues: Large ribosomal subunit protein bL31 (69 aa).

Positions 17, 19, 37, and 40 each coordinate Zn(2+).

This sequence belongs to the bacterial ribosomal protein bL31 family. Type A subfamily. As to quaternary structure, part of the 50S ribosomal subunit. The cofactor is Zn(2+).

Binds the 23S rRNA. The chain is Large ribosomal subunit protein bL31 from Clostridium botulinum (strain Eklund 17B / Type B).